We begin with the raw amino-acid sequence, 572 residues long: MATIGRRAYAEIFGPTVGDRVRLADTDLLIEVEADYTLRAGGYGEEVKFGGGKTIRDGMAQSQRTRAQGAVDTVLTNALILDHWGIVKADIGLKDGRIAAIGKAGNPDVQPGVDIVIGPGTEIISCEGNIVTAGGIDSHIHFICPQQIEEALASGITTMLGGGTGPATGTFATTATPGPWHIERMLQAADAFPMNLGFLGKGNASLPDALHEQIEAGVMGLKLHEDWGTTPSAISNCLDVADATDTQVAIHSDTLNESGFVENTIAAVGGRSICAFHTEGAGGGHAPDILRVVGEENFLPSSTNPTMPYTVNTLDEHVDMLMVCHHLDAGIAEDLAFAESRIRKETIAAEDVLHDLGAISMFSSDSQAMGRVGEVVLRCWQTAHKMKLQRGKLPEDSERNDNFRVKRYVAKYTINPAISHGIAHEVGSIEVGKWADLVIWKPAFFGVKPFTLIKGGTIAMAAMGDPNASIPTPQPVHYRPMFGSYGGSLARSSLTFVSQAGLAAGIKERYGLAKHLSAVKNIRNVRKKDLVHNGYTPKMEIDAQTYAVRADGHLLTCDPAVQLPLTQRYFLF.

Positions 134-572 constitute a Urease domain; sequence GGIDSHIHFI…LPLTQRYFLF (439 aa). His-139, His-141, and Lys-222 together coordinate Ni(2+). Lys-222 bears the N6-carboxylysine mark. His-224 contributes to the substrate binding site. Ni(2+) is bound by residues His-251 and His-277. Catalysis depends on His-325, which acts as the Proton donor. Asp-365 serves as a coordination point for Ni(2+).

This sequence belongs to the metallo-dependent hydrolases superfamily. Urease alpha subunit family. As to quaternary structure, heterotrimer of UreA (gamma), UreB (beta) and UreC (alpha) subunits. Three heterotrimers associate to form the active enzyme. Requires Ni cation as cofactor. Carboxylation allows a single lysine to coordinate two nickel ions.

It is found in the cytoplasm. It catalyses the reaction urea + 2 H2O + H(+) = hydrogencarbonate + 2 NH4(+). The protein operates within nitrogen metabolism; urea degradation; CO(2) and NH(3) from urea (urease route): step 1/1. The protein is Urease subunit alpha of Variovorax paradoxus (strain S110).